We begin with the raw amino-acid sequence, 250 residues long: Global transcriptional regulator CodY (250 aa).

Residues Met-1–Leu-146 are GAF domain. Positions Ala-194 to Arg-213 form a DNA-binding region, H-T-H motif.

It belongs to the CodY family.

It is found in the cytoplasm. Its function is as follows. DNA-binding global transcriptional regulator which is involved in the adaptive response to starvation and acts by directly or indirectly controlling the expression of numerous genes in response to nutrient availability. During rapid exponential growth, CodY is highly active and represses genes whose products allow adaptation to nutrient depletion. This is Global transcriptional regulator CodY from Caldanaerobacter subterraneus subsp. tengcongensis (strain DSM 15242 / JCM 11007 / NBRC 100824 / MB4) (Thermoanaerobacter tengcongensis).